A 293-amino-acid chain; its full sequence is Fructose-bisphosphate aldolase (293 aa).

S50 serves as a coordination point for D-glyceraldehyde 3-phosphate. The active-site Proton donor is the D85. Residues H86, D106, E136, and H178 each coordinate Zn(2+). Residue G179 participates in dihydroxyacetone phosphate binding. Zn(2+) is bound at residue H208. Residues 209 to 211 and 230 to 233 each bind dihydroxyacetone phosphate; these read GGS and NVNT.

It belongs to the class II fructose-bisphosphate aldolase family. The cofactor is Zn(2+).

It carries out the reaction beta-D-fructose 1,6-bisphosphate = D-glyceraldehyde 3-phosphate + dihydroxyacetone phosphate. Its pathway is carbohydrate degradation; glycolysis; D-glyceraldehyde 3-phosphate and glycerone phosphate from D-glucose: step 4/4. Functionally, catalyzes the aldol condensation of dihydroxyacetone phosphate (DHAP or glycerone-phosphate) with glyceraldehyde 3-phosphate (G3P) to form fructose 1,6-bisphosphate (FBP) in gluconeogenesis and the reverse reaction in glycolysis. This is Fructose-bisphosphate aldolase (fba) from Streptococcus pyogenes serotype M3 (strain ATCC BAA-595 / MGAS315).